Reading from the N-terminus, the 80-residue chain is Exodeoxyribonuclease 7 small subunit (80 aa).

Belongs to the XseB family. As to quaternary structure, heterooligomer composed of large and small subunits.

Its subcellular location is the cytoplasm. The enzyme catalyses Exonucleolytic cleavage in either 5'- to 3'- or 3'- to 5'-direction to yield nucleoside 5'-phosphates.. In terms of biological role, bidirectionally degrades single-stranded DNA into large acid-insoluble oligonucleotides, which are then degraded further into small acid-soluble oligonucleotides. This chain is Exodeoxyribonuclease 7 small subunit, found in Klebsiella pneumoniae (strain 342).